The following is a 273-amino-acid chain: Nickel import ATP-binding protein NikE (273 aa).

The region spanning 13-252 (YRTGGLLRKR…AHPVGRQLQA (240 aa)) is the ABC transporter domain. Residue 45–52 (GSSGSGKS) participates in ATP binding.

This sequence belongs to the ABC transporter superfamily. Nickel importer (TC 3.A.1.5.3) family. In terms of assembly, the complex is composed of two ATP-binding proteins (NikD and NikE), two transmembrane proteins (NikB and NikC) and a solute-binding protein (NikA).

It is found in the cell inner membrane. The catalysed reaction is Ni(2+)(out) + ATP + H2O = Ni(2+)(in) + ADP + phosphate + H(+). Part of the ABC transporter complex NikABCDE involved in nickel import. Responsible for energy coupling to the transport system. This is Nickel import ATP-binding protein NikE from Pseudomonas putida (strain ATCC 47054 / DSM 6125 / CFBP 8728 / NCIMB 11950 / KT2440).